The following is a 685-amino-acid chain: Translation initiation factor IF-2 (685 aa).

A tr-type G domain is found at 185–354 (KRPPVVTVMG…LLTAEMQELK (170 aa)). A G1 region spans residues 194–201 (GHVDHGKT). 194-201 (GHVDHGKT) lines the GTP pocket. The interval 219–223 (GITQH) is G2. The G3 stretch occupies residues 240–243 (DTPG). GTP-binding positions include 240 to 244 (DTPGH) and 294 to 297 (NKMD). Residues 294-297 (NKMD) form a G4 region. Positions 330–332 (SAH) are G5.

This sequence belongs to the TRAFAC class translation factor GTPase superfamily. Classic translation factor GTPase family. IF-2 subfamily.

It is found in the cytoplasm. Its function is as follows. One of the essential components for the initiation of protein synthesis. Protects formylmethionyl-tRNA from spontaneous hydrolysis and promotes its binding to the 30S ribosomal subunits. Also involved in the hydrolysis of GTP during the formation of the 70S ribosomal complex. This is Translation initiation factor IF-2 from Clostridium tetani (strain Massachusetts / E88).